Here is a 412-residue protein sequence, read N- to C-terminus: MGFITKAIPIVLAALSTVNGARILEAGPHAETIPNKYIVVMKKDVSEEAFSAHTTWLSQTLNSRLMRRAGSSKPMAGMQDKYSLGNVFRAYSGEFDEAMIKDISGHDDVDFIEPDFVVRTTTNGTNLTHQDNVPSWGLARVGSKQAGGTTYYYDPSAGKGVRAYIIDTGIDTDHKDFGGRAKWGKNFADDMDQDCNGHGTHVAGTVGGTQYGLAKSVSLIAVKVLDCEGSGSNSGVIKGMEWAMRDASGGGNGTAKAAGKTVMNMSLGGPRSEATNQAAKAISDAGIFLAVAAGNENMDAQHSSPASEPSVCTVAASTKDDGKASFSNYGSAVDVYAPGKDITSLKPGGSTDTLSGTSMASPHVCGLGAYLIGLGKQGGPGLCDTIKEMANDAIQSPGEDTTSKLIYNGSGK.

The first 20 residues, 1–20 (MGFITKAIPIVLAALSTVNG), serve as a signal peptide directing secretion. Residues 21–127 (ARILEAGPHA…VRTTTNGTNL (107 aa)) constitute a propeptide that is removed on maturation. An Inhibitor I9 domain is found at 36–120 (KYIVVMKKDV…FIEPDFVVRT (85 aa)). The Peptidase S8 domain occupies 135–412 (SWGLARVGSK…SKLIYNGSGK (278 aa)). Residues aspartate 167 and histidine 198 each act as charge relay system in the active site. N-linked (GlcNAc...) asparagine glycans are attached at residues asparagine 252 and asparagine 264. Serine 358 serves as the catalytic Charge relay system. An N-linked (GlcNAc...) asparagine glycan is attached at asparagine 408.

This sequence belongs to the peptidase S8 family.

Its subcellular location is the secreted. Functionally, secreted subtilisin-like serine protease with keratinolytic activity that contributes to pathogenicity. This is Subtilisin-like protease 6 (SUB6) from Arthroderma benhamiae (strain ATCC MYA-4681 / CBS 112371) (Trichophyton mentagrophytes).